The chain runs to 117 residues: NADH-ubiquinone oxidoreductase chain 3 (117 aa).

Helical transmembrane passes span 4 to 24 (FLGI…LLGL), 61 to 81 (LVAI…PWAL), and 86 to 106 (IGYF…VGFI).

This sequence belongs to the complex I subunit 3 family.

Its subcellular location is the mitochondrion membrane. It carries out the reaction a ubiquinone + NADH + 5 H(+)(in) = a ubiquinol + NAD(+) + 4 H(+)(out). In terms of biological role, core subunit of the mitochondrial membrane respiratory chain NADH dehydrogenase (Complex I) that is believed to belong to the minimal assembly required for catalysis. Complex I functions in the transfer of electrons from NADH to the respiratory chain. The immediate electron acceptor for the enzyme is believed to be ubiquinone. This Prototheca wickerhamii protein is NADH-ubiquinone oxidoreductase chain 3 (NAD3).